A 477-amino-acid chain; its full sequence is NADH-quinone oxidoreductase subunit N (477 aa).

Transmembrane regions (helical) follow at residues 7–27, 37–57, 77–97, 109–129, 162–182, 201–221, 233–253, 272–292, 297–317, 323–343, 369–389, 402–424, and 446–466; these read VLAH…LILI, GPMT…LVLG, FMKV…QTYL, ILIL…GLIA, FVLG…IYGF, LGVV…MSTV, GAPT…AIAI, IIVF…IGQT, LMAY…AAGT, GVLA…AAIL, AFFL…AGFF, HLYP…YLRI, and AVLI…GSFV.

This sequence belongs to the complex I subunit 2 family. NDH-1 is composed of 14 different subunits. Subunits NuoA, H, J, K, L, M, N constitute the membrane sector of the complex.

It is found in the cell inner membrane. The catalysed reaction is a quinone + NADH + 5 H(+)(in) = a quinol + NAD(+) + 4 H(+)(out). Its function is as follows. NDH-1 shuttles electrons from NADH, via FMN and iron-sulfur (Fe-S) centers, to quinones in the respiratory chain. The immediate electron acceptor for the enzyme in this species is believed to be ubiquinone. Couples the redox reaction to proton translocation (for every two electrons transferred, four hydrogen ions are translocated across the cytoplasmic membrane), and thus conserves the redox energy in a proton gradient. The chain is NADH-quinone oxidoreductase subunit N from Beijerinckia indica subsp. indica (strain ATCC 9039 / DSM 1715 / NCIMB 8712).